Consider the following 330-residue polypeptide: Phosphate acyltransferase (330 aa).

This sequence belongs to the PlsX family. As to quaternary structure, homodimer. Probably interacts with PlsY.

It is found in the cytoplasm. The enzyme catalyses a fatty acyl-[ACP] + phosphate = an acyl phosphate + holo-[ACP]. Its pathway is lipid metabolism; phospholipid metabolism. Its function is as follows. Catalyzes the reversible formation of acyl-phosphate (acyl-PO(4)) from acyl-[acyl-carrier-protein] (acyl-ACP). This enzyme utilizes acyl-ACP as fatty acyl donor, but not acyl-CoA. This Streptococcus pneumoniae (strain P1031) protein is Phosphate acyltransferase.